The following is a 113-amino-acid chain: Venom protein 184 (113 aa).

The first 21 residues, 1-21 (MKTTLIFCILGIVIPTAVVSS), serve as a signal peptide directing secretion.

In terms of processing, contains 3 disulfide bonds. Expressed by the venom gland.

Its subcellular location is the secreted. The protein is Venom protein 184 of Lychas mucronatus (Chinese swimming scorpion).